Consider the following 239-residue polypeptide: Small ribosomal subunit protein uS3c (239 aa).

The 97-residue stretch at 43-139 (IKNYIQKNRK…RFNISIEKVK (97 aa)) folds into the KH type-2 domain. Residues 50 to 74 (NRKKGSNRKIESDSSSEVITHNRKM) form a disordered region.

It belongs to the universal ribosomal protein uS3 family. As to quaternary structure, part of the 30S ribosomal subunit.

Its subcellular location is the plastid. The protein resides in the chloroplast. In Triticum aestivum (Wheat), this protein is Small ribosomal subunit protein uS3c (rps3).